Here is a 663-residue protein sequence, read N- to C-terminus: MFGKLSLDAVPFHEPIVMVTIAGIILGGLALVGLITYFGKWTYLWKEWLTSVDHKRLGIMYIIVAIVMLLRGFADAIMMRSQQALASAGEAGFLPPHHYDQIFTAHGVIMIFFVAMPFVIGLMNLVVPLQIGARDVAFPFLNNLSFWFTVVGVILVNVSLGVGEFAQTGWLAYPPLSGIEYSPGVGVDYWIWSLQLSGIGTTLTGINFFVTILKMRAPGMTMFKMPVFTWASLCANVLIIASFPILTVTVALLTLDRYLGTHFFTNDMGGNMMMYINLIWAWGHPEVYILILPVFGVFSEIAATFSRKRLFGYTSLVWATVCITVLSFIVWLHHFFTMGAGANVNAFFGITTMIIAIPTGVKIFNWLFTMYQGRIVFHSAMLWTIGFIVTFSVGGMTGVLLAVPGADFVLHNSLFLIAHFHNVIIGGVVFGCFAGMTYWWPKAFGFKLNETWGKRAFWFWIIGFFVAFMPLYALGFMGMTRRLSQQIDPQFHTMLMIAASGAVLIALGILCLVIQMYVSIRDRDQNRDLTGDPWGGRTLEWATSSPPPFYNFAVVPHVHERDAFWEMKEKGEAYKKPDHYEEIHMPKNSGAGIVIAAFSTIFGFAMIWHIWWLAIVGFAGMIITWIVKSFDEDVDYYVPVAEIEKLENQHFDEITKAGLKNGN.

The Periplasmic segment spans residues 1–16 (MFGKLSLDAVPFHEPI). The chain crosses the membrane as a helical span at residues 17–35 (VMVTIAGIILGGLALVGLI). Residues 36 to 52 (TYFGKWTYLWKEWLTSV) lie on the Cytoplasmic side of the membrane. A helical transmembrane segment spans residues 53-80 (DHKRLGIMYIIVAIVMLLRGFADAIMMR). 2 residues coordinate ubiquinone-8: Arg-71 and Asp-75. The Periplasmic portion of the chain corresponds to 81–95 (SQQALASAGEAGFLP). The helical transmembrane segment at 96 to 132 (PHHYDQIFTAHGVIMIFFVAMPFVIGLMNLVVPLQIG) threads the bilayer. Ubiquinone-8 is bound at residue His-98. Residue His-106 coordinates heme b. Topologically, residues 133–137 (ARDVA) are cytoplasmic. Residues 138–161 (FPFLNNLSFWFTVVGVILVNVSLG) form a helical membrane-spanning segment. The Periplasmic segment spans residues 162 to 184 (VGEFAQTGWLAYPPLSGIEYSPG). Heme b is bound at residue Trp-170. Residues 185-215 (VGVDYWIWSLQLSGIGTTLTGINFFVTILKM) traverse the membrane as a helical segment. At 216 to 224 (RAPGMTMFK) the chain is on the cytoplasmic side. A helical membrane pass occupies residues 225 to 260 (MPVFTWASLCANVLIIASFPILTVTVALLTLDRYLG). The Periplasmic portion of the chain corresponds to 261–270 (THFFTNDMGG). A helical transmembrane segment spans residues 271–307 (NMMMYINLIWAWGHPEVYILILPVFGVFSEIAATFSR). His-284 serves as a coordination point for Cu(2+). Positions 284–288 (HPEVY) form a cross-link, 1'-histidyl-3'-tyrosine (His-Tyr). Tyr-288 contributes to the Fe(II)-heme o binding site. Residues 308–311 (KRLF) lie on the Cytoplasmic side of the membrane. The helical transmembrane segment at 312–326 (GYTSLVWATVCITVL) threads the bilayer. Residues 327–340 (SFIVWLHHFFTMGA) lie on the Periplasmic side of the membrane. Residues His-333 and His-334 each contribute to the Cu(2+) site. The chain crosses the membrane as a helical span at residues 341-369 (GANVNAFFGITTMIIAIPTGVKIFNWLFT). Residues 370–377 (MYQGRIVF) are Cytoplasmic-facing. The helical transmembrane segment at 378 to 409 (HSAMLWTIGFIVTFSVGGMTGVLLAVPGADFV) threads the bilayer. Residues 410–412 (LHN) lie on the Periplasmic side of the membrane. Residues His-411 and His-419 each contribute to the Fe(II)-heme o site. Residues 413–445 (SLFLIAHFHNVIIGGVVFGCFAGMTYWWPKAFG) form a helical membrane-spanning segment. His-421 is a binding site for heme b. At 446 to 448 (FKL) the chain is on the cytoplasmic side. The helical transmembrane segment at 449–477 (NETWGKRAFWFWIIGFFVAFMPLYALGFM) threads the bilayer. The Periplasmic segment spans residues 478-489 (GMTRRLSQQIDP). The heme b site is built by Arg-481 and Arg-482. The helical transmembrane segment at 490 to 521 (QFHTMLMIAASGAVLIALGILCLVIQMYVSIR) threads the bilayer. Residues 522 to 587 (DRDQNRDLTG…DHYEEIHMPK (66 aa)) lie on the Cytoplasmic side of the membrane. A helical transmembrane segment spans residues 588 to 606 (NSGAGIVIAAFSTIFGFAM). The Periplasmic segment spans residues 607–613 (IWHIWWL). The chain crosses the membrane as a helical span at residues 614 to 632 (AIVGFAGMIITWIVKSFDE). Topologically, residues 633–663 (DVDYYVPVAEIEKLENQHFDEITKAGLKNGN) are cytoplasmic.

It belongs to the heme-copper respiratory oxidase family. The cytochrome bo(3) ubiquinol oxidase complex is a heterooctamer of two A chains, two B chains, two C chains and two D chains. Cu(2+) is required as a cofactor. Heme b serves as cofactor. It depends on Fe(II)-heme o as a cofactor.

It localises to the cell inner membrane. It carries out the reaction 2 a ubiquinol + O2 + n H(+)(in) = 2 a ubiquinone + 2 H2O + n H(+)(out). Cytochrome bo(3) ubiquinol oxidase is the terminal enzyme in the aerobic respiratory chain of E.coli that predominates when cells are grown at high aeration. Catalyzes the four-electron reduction of O2 to water, using a ubiquinol as a membrane soluble electron donor for molecular oxygen reduction; ubiquinol-8 is the natural substrate for E.coli. Has proton pump activity across the membrane in addition to electron transfer, pumping 2 protons/electron and generating a proton motive force. All the redox centers of this enzyme complex are located within the largest subunit, subunit I. Protons are probably pumped via D- and K- channels found in this subunit. The sequence is that of Cytochrome bo(3) ubiquinol oxidase subunit 1 (cyoB) from Escherichia coli O157:H7.